Reading from the N-terminus, the 155-residue chain is Ribosome maturation factor RimP (155 aa).

Belongs to the RimP family.

The protein resides in the cytoplasm. Functionally, required for maturation of 30S ribosomal subunits. The sequence is that of Ribosome maturation factor RimP from Maridesulfovibrio salexigens (strain ATCC 14822 / DSM 2638 / NCIMB 8403 / VKM B-1763) (Desulfovibrio salexigens).